The primary structure comprises 303 residues: RELT-like protein 2 (303 aa).

Residues 15–35 (LYMLFLLVLVFFLMGLVGFMI) form a helical membrane-spanning segment. Disordered stretches follow at residues 46-67 (CRTS…DDDM) and 132-303 (CLHC…AGSM). At serine 52 the chain carries Phosphoserine. Composition is skewed to basic and acidic residues over residues 148-158 (RSKEGKSRPRT) and 172-188 (THIE…DGSP). Residues 194 to 212 (GSGGGQDPGGGQGSGGGQP) show a composition bias toward gly residues. Over residues 278–296 (QEANGQPSKPDTSDHQVSL) the composition is skewed to polar residues.

The protein belongs to the RELT family. As to quaternary structure, interacts with RELT, RELL1 and OXSR1. Interacts with PLSCR1. Interacts with TRAF2. Post-translationally, phosphorylated in vitro by OXSR1. In terms of tissue distribution, primarily expressed in spleen, thymus, testis, peripheral blood leukocytes, brain and placenta. Not detected in prostate, ovary, small intestine, colon, heart, lung, liver, skeletal muscle, kidney and pancreas.

The protein localises to the cell membrane. Induces activation of MAPK14/p38 cascade, when overexpressed. Induces apoptosis, when overexpressed. The sequence is that of RELT-like protein 2 (RELL2) from Homo sapiens (Human).